Reading from the N-terminus, the 192-residue chain is Glycerol-3-phosphate acyltransferase (192 aa).

5 helical membrane passes run 1-21 (MFIA…AYIL), 49-69 (GLAG…IYSL), 80-100 (ELCI…WLKF), 110-130 (IGVI…SWLF), and 143-163 (IVSI…VVAL).

It belongs to the PlsY family. Probably interacts with PlsX.

It is found in the cell inner membrane. It catalyses the reaction an acyl phosphate + sn-glycerol 3-phosphate = a 1-acyl-sn-glycero-3-phosphate + phosphate. It functions in the pathway lipid metabolism; phospholipid metabolism. In terms of biological role, catalyzes the transfer of an acyl group from acyl-phosphate (acyl-PO(4)) to glycerol-3-phosphate (G3P) to form lysophosphatidic acid (LPA). This enzyme utilizes acyl-phosphate as fatty acyl donor, but not acyl-CoA or acyl-ACP. The chain is Glycerol-3-phosphate acyltransferase from Anaplasma phagocytophilum (strain HZ).